A 259-amino-acid chain; its full sequence is Undecaprenyl-diphosphatase 4 (259 aa).

A run of 8 helical transmembrane segments spans residues 1–21 (MNWL…FLPI), 39–59 (AGLF…FIYY), 71–91 (FSKL…IGLL), 99–119 (ISKT…FLYM), 133–153 (ITYK…FPAI), 173–193 (AAYF…ILQF), 208–228 (SLIV…SWMI), and 239–259 (FAYY…THVF).

This sequence belongs to the UppP family.

Its subcellular location is the cell membrane. The enzyme catalyses di-trans,octa-cis-undecaprenyl diphosphate + H2O = di-trans,octa-cis-undecaprenyl phosphate + phosphate + H(+). Its function is as follows. Catalyzes the dephosphorylation of undecaprenyl diphosphate (UPP). Confers resistance to bacitracin. This is Undecaprenyl-diphosphatase 4 from Bacillus thuringiensis (strain Al Hakam).